The following is a 781-amino-acid chain: MKVTVDFEECLKDSPRFRAALEEVEGDVAELELKLDKLVKLCIAMIDTGKAFCLANKQFMNGIRDLAQYSCKDALVETNLTKFSDTLQEMINYHNILFDQTQRSIKAQLQTFVKEDIKKFKDAKKQFEKVSEEKENALVKNAQVQRNKQHEVEEATNILTATRKCFRHIALDYVLQINVLQSKRRSEILKSMLSFMYAHLTFFHQGYDLFSELGPYMKDLGAQLDQLAVDAAKEKRDMEQKHSTIQQKDYSGDDTKLEYNVDAANGIVMEGYLFKRASNAFKTWNRRWFSIQNNQLVYQKKFKDNPTVVVEDLRLCTVKHCEDIERRFCFEVVSPTKSCMLQADSEKLRQAWIKAVQTSIATAYREKGDESEKQEKKSSPSTGSLESGSETKEKLLKGESALQRVQCIPGNAACCDCGLADPRWASINLGITLCIECSGIHRSLGVHFSKVRSLTLDSWEPELLKLMCELGNDVINRIYEAKLEKMGVKKPQPGSQRQEKEMYIKAKYVERKFVEKQPAAAVSPLESRTKVLPQSQEEKRHSAPEKSFLAIEQGAASPRVRSSDSGIQQSVDDSREHLASTISANSLYEPEGEKQESSVFYDSRQLNPGLHLYRAAFEKNLPDMAEALAHGAEVNWVNMEENKATPLIQAVRGGSLVTCEFLLQNGANVNIRDMKGRGPLHHATVLGHTGQVCLFLKRGANQHATDEDGKDPLSIAVEAANADIVTLLRLARMNEEMRESEGLYGQPGDEIYQDIFRDFSQMASNNPEKLNRFQQSDSQKP.

One can recognise a BAR domain in the interval 1 to 226 (MKVTVDFEEC…MKDLGAQLDQ (226 aa)). A PH domain is found at 266–361 (GIVMEGYLFK…WIKAVQTSIA (96 aa)). Residues 365–378 (REKGDESEKQEKKS) are compositionally biased toward basic and acidic residues. The tract at residues 365–390 (REKGDESEKQEKKSSPSTGSLESGSE) is disordered. Over residues 379–388 (SPSTGSLESG) the composition is skewed to low complexity. The region spanning 399-521 (ESALQRVQCI…KFVEKQPAAA (123 aa)) is the Arf-GAP domain. The C4-type zinc finger occupies 414–437 (CCDCGLADPRWASINLGITLCIEC). A disordered region spans residues 520-576 (AAVSPLESRTKVLPQSQEEKRHSAPEKSFLAIEQGAASPRVRSSDSGIQQSVDDSRE). 3 ANK repeats span residues 642–671 (NKATPLIQAVRGGSLVTCEFLLQNGANVNI), 675–704 (KGRGPLHHATVLGHTGQVCLFLKRGANQHA), and 708–737 (DGKDPLSIAVEAANADIVTLLRLARMNEEM).

It localises to the endosome membrane. The protein resides in the cell membrane. With respect to regulation, GAP activity stimulated by phosphatidylinositol 4,5-bisphosphate (PIP2) and phosphatidic acid. Its function is as follows. GTPase-activating protein (GAP) for ADP ribosylation factor 6 (ARF6). This Gallus gallus (Chicken) protein is Arf-GAP with coiled-coil, ANK repeat and PH domain-containing protein 2 (ACAP2).